The following is a 211-amino-acid chain: Synaptosomal-associated protein 23 (211 aa).

Methionine 1 is modified (N-acetylmethionine). 5 positions are modified to phosphoserine: serine 5, serine 6, serine 20, serine 23, and serine 34. In terms of domain architecture, t-SNARE coiled-coil homology 1 spans 14 to 76; sequence HQITDESLES…RETEKTLTEL (63 aa). A coiled-coil region spans residues 23–76; the sequence is STRRILGLAIESQDAGIKTITMLDEQKEQLNRIEEGLDQINKDMRETEKTLTEL. 5 S-palmitoyl cysteine lipidation sites follow: cysteine 79, cysteine 80, cysteine 83, cysteine 85, and cysteine 87. Serine 110 is subject to Phosphoserine. Residue cysteine 112 is the site of S-palmitoyl cysteine attachment. The t-SNARE coiled-coil homology 2 domain maps to 146–208; it reads DAREDEMEEN…DIANARAKKL (63 aa). At serine 161 the chain carries Phosphoserine.

This sequence belongs to the SNAP-25 family. As to quaternary structure, homotetramer (via coiled-coil domain), also forms heterotetramers with STX4 and VAMP3. Found in a complex with VAMP8 and STX1A. Found in a complex with VAMP8 and STX4 in pancreas. Interacts simultaneously with SNAPIN and SYN4. Interacts with STX1A. Interacts with STX12. Interacts tightly to multiple syntaxins and synaptobrevins/VAMPs. Interacts with ZDHHC13 (via ANK repeats). Interacts with ZDHHC17 (via ANK repeats). Ubiquitous. Highest levels where found in placenta.

It is found in the cell membrane. The protein localises to the synapse. Its subcellular location is the synaptosome. Essential component of the high affinity receptor for the general membrane fusion machinery and an important regulator of transport vesicle docking and fusion. This is Synaptosomal-associated protein 23 (SNAP23) from Homo sapiens (Human).